The primary structure comprises 316 residues: Probable cell division protein WhiA (316 aa).

The H-T-H motif DNA-binding region spans 275 to 309; sequence TLKELGEMVSSGKISKSGINHRLRKLDEIAEQLRS.

The protein belongs to the WhiA family.

Involved in cell division and chromosome segregation. This chain is Probable cell division protein WhiA, found in Bacillus licheniformis (strain ATCC 14580 / DSM 13 / JCM 2505 / CCUG 7422 / NBRC 12200 / NCIMB 9375 / NCTC 10341 / NRRL NRS-1264 / Gibson 46).